A 42-amino-acid polypeptide reads, in one-letter code: Photosystem II reaction center protein J (42 aa).

Residues 10–30 form a helical membrane-spanning segment; that stretch reads IPLWLVGTVVGIAALTLLSVF.

The protein belongs to the PsbJ family. As to quaternary structure, PSII is composed of 1 copy each of membrane proteins PsbA, PsbB, PsbC, PsbD, PsbE, PsbF, PsbH, PsbI, PsbJ, PsbK, PsbL, PsbM, PsbT, PsbX, PsbY, PsbZ, Psb30/Ycf12, at least 3 peripheral proteins of the oxygen-evolving complex and a large number of cofactors. It forms dimeric complexes.

It is found in the plastid. It localises to the chloroplast thylakoid membrane. Functionally, one of the components of the core complex of photosystem II (PSII). PSII is a light-driven water:plastoquinone oxidoreductase that uses light energy to abstract electrons from H(2)O, generating O(2) and a proton gradient subsequently used for ATP formation. It consists of a core antenna complex that captures photons, and an electron transfer chain that converts photonic excitation into a charge separation. The sequence is that of Photosystem II reaction center protein J from Tupiella akineta (Green alga).